The following is a 262-amino-acid chain: Ribosome-recycling factor, mitochondrial (262 aa).

Residues 1–55 (MALGLRCFRLVHPAFCNSLAALTRPVSEVTLQTVRGRQNDHGQCMAYAAVPVRHF) constitute a mitochondrion transit peptide.

Belongs to the RRF family.

It localises to the mitochondrion. Responsible for the disassembly of ribosomes from messenger RNA at the termination of mitochondrial protein biosynthesis. Acts in collaboration with GFM2. Promotes mitochondrial ribosome recycling by dissolution of intersubunit contacts. The protein is Ribosome-recycling factor, mitochondrial (MRRF) of Bos taurus (Bovine).